Reading from the N-terminus, the 526-residue chain is MQNMFPWLTVIILLPLVAALAVPLIPEKQVKWYSFAVCLVDFVLMVAAFFTSYDLSNPDIQLAERYRWMPQIGLEWSVGADGLSMPLILLTGFITALATLAAWPVTLRPRMFHFLMLAMLAGMVGVFAVQDMVLFFLFFELELVPVYLMLAIWGGKGRLYAATKFILYTAVGSLFILVVGLAMYFYGDLRTFNMVELAAKNYDPTFQNLCFLGLLIAYAVKLPIFPLHTWLPDAHGEATAPVHMLLAGILLKMGGYALIRMNVGFFPEATQLFAPLLIVLGIVNIIYAALTSFGQRNLKRKIAYSSISHMGFVLIGVGSLSEIGMGGAMLQMISHGLIGASLFFLVGATYDRTHTLILSEMGGIAPKMPKIFAMFTACSMASLALPGMSGFVAELMVFVGMATTDAYSFQFKALVVLFAAFGVILTPIYLLSMLREIFYGTLNHAVVHEEDLVDAEPREVFIIASLLVPIFGIGLYPKLTTDLYAPTTDQLTRVTRERIARAAPPPALLSGVYSVEFADRDRVSLR.

13 helical membrane-spanning segments follow: residues 5–25 (FPWL…VPLI), 32–52 (WYSF…FFTS), 87–107 (LILL…PVTL), 111–131 (MFHF…AVQD), 133–153 (VLFF…LAIW), 165–185 (FILY…AMYF), 211–231 (FLGL…HTWL), 239–259 (TAPV…YALI), 273–293 (FAPL…LTSF), 302–320 (IAYS…VGSL), 331–351 (QMIS…ATYD), 371–393 (IFAM…GFVA), and 414–434 (LVVL…LSML).

It belongs to the complex I subunit 4 family.

It is found in the cell inner membrane. The enzyme catalyses a plastoquinone + NADH + (n+1) H(+)(in) = a plastoquinol + NAD(+) + n H(+)(out). It catalyses the reaction a plastoquinone + NADPH + (n+1) H(+)(in) = a plastoquinol + NADP(+) + n H(+)(out). NDH-1 shuttles electrons from NAD(P)H, via FMN and iron-sulfur (Fe-S) centers, to quinones in the respiratory chain. The immediate electron acceptor for the enzyme in this species is believed to be plastoquinone. Couples the redox reaction to proton translocation (for every two electrons transferred, four hydrogen ions are translocated across the cytoplasmic membrane), and thus conserves the redox energy in a proton gradient. In Gloeobacter violaceus (strain ATCC 29082 / PCC 7421), this protein is NAD(P)H-quinone oxidoreductase chain 4.